Consider the following 95-residue polypeptide: MKLDSGIYSEAQRVVRTPKFRYIMLGLVGAAVVPTAYMRRGYTVPAHSLDNINGVDTTKASVMGTEQRAAMTKGKSLQEMMDDDEVTYLMFSSIM.

The chain crosses the membrane as a helical span at residues 20-38 (FRYIMLGLVGAAVVPTAYM).

Its subcellular location is the mitochondrion membrane. The chain is Stationary phase-expressed protein 1 (SPG1) from Saccharomyces cerevisiae (strain RM11-1a) (Baker's yeast).